Here is a 633-residue protein sequence, read N- to C-terminus: Alpha-amylase (633 aa).

The active-site Nucleophile is the E123. The active-site Proton donor is the D214.

Belongs to the glycosyl hydrolase 57 family.

The enzyme catalyses Endohydrolysis of (1-&gt;4)-alpha-D-glucosidic linkages in polysaccharides containing three or more (1-&gt;4)-alpha-linked D-glucose units.. This chain is Alpha-amylase (amyA), found in Pyrococcus horikoshii (strain ATCC 700860 / DSM 12428 / JCM 9974 / NBRC 100139 / OT-3).